The following is a 525-amino-acid chain: Cytochrome P450 4V2 (525 aa).

A helical membrane pass occupies residues 13-33; it reads LLLWGAASAVSVAGATVLLNI. E329 and C467 together coordinate heme.

This sequence belongs to the cytochrome P450 family. Requires heme as cofactor.

The protein localises to the endoplasmic reticulum membrane. It carries out the reaction dodecanoate + reduced [NADPH--hemoprotein reductase] + O2 = 12-hydroxydodecanoate + oxidized [NADPH--hemoprotein reductase] + H2O + H(+). It catalyses the reaction tetradecanoate + reduced [NADPH--hemoprotein reductase] + O2 = 14-hydroxytetradecanoate + oxidized [NADPH--hemoprotein reductase] + H2O + H(+). The catalysed reaction is hexadecanoate + reduced [NADPH--hemoprotein reductase] + O2 = 16-hydroxyhexadecanoate + oxidized [NADPH--hemoprotein reductase] + H2O + H(+). The enzyme catalyses (5Z,8Z,11Z,14Z,17Z)-eicosapentaenoate + reduced [NADPH--hemoprotein reductase] + O2 = 20-hydroxy-(5Z,8Z,11Z,14Z,17Z)-eicosapentaenoate + oxidized [NADPH--hemoprotein reductase] + H2O + H(+). It carries out the reaction (4Z,7Z,10Z,13Z,16Z,19Z)-docosahexaenoate + reduced [NADPH--hemoprotein reductase] + O2 = 22-hydroxy-(4Z,7Z,10Z,13Z,16Z,19Z)-docosahexaenoate + oxidized [NADPH--hemoprotein reductase] + H2O + H(+). The protein operates within lipid metabolism; fatty acid metabolism. Its activity is regulated as follows. Inhibited by N-hydroxy-N'-(4-n-butyl-2-methylphenyl formamidine)(HET0016) with an IC(50) of 38 nM. In terms of biological role, a cytochrome P450 monooxygenase involved in fatty acid metabolism in the eye. Catalyzes the omega-hydroxylation of polyunsaturated fatty acids (PUFAs) docosahexaenoate (DHA) and its precursor eicosapentaenoate (EPA), and may contribute to the homeostasis of these retinal PUFAs. Omega hydroxylates saturated fatty acids such as laurate, myristate and palmitate, the catalytic efficiency decreasing in the following order: myristate &gt; laurate &gt; palmitate (C14&gt;C12&gt;C16). Mechanistically, uses molecular oxygen inserting one oxygen atom into a substrate, and reducing the second into a water molecule, with two electrons provided by NADPH via cytochrome P450 reductase (CPR; NADPH-ferrihemoprotein reductase). The chain is Cytochrome P450 4V2 (Cyp4v2) from Rattus norvegicus (Rat).